A 295-amino-acid chain; its full sequence is Transmembrane protein 71 (295 aa).

2 helical membrane passes run 229–249 and 253–273; these read LLQE…ISAC and FMGE…VAYV.

This sequence belongs to the TMEM71 family.

It localises to the membrane. The chain is Transmembrane protein 71 (TMEM71) from Homo sapiens (Human).